Here is a 381-residue protein sequence, read N- to C-terminus: Cytochrome b (381 aa).

The next 4 helical transmembrane spans lie at 34-54 (FGSL…FLAM), 78-99 (WLIR…YLHI), 114-134 (WNIG…GYVL), and 179-199 (FFAF…LHFL). Heme b is bound by residues His84 and His98. Heme b contacts are provided by His183 and His197. An a ubiquinone-binding site is contributed by His202. Transmembrane regions (helical) follow at residues 227–247 (YKDI…VLFL), 289–309 (LGGV…PFLH), 321–341 (LTQL…WIGG), and 348–368 (FIFI…IITP).

This sequence belongs to the cytochrome b family. In terms of assembly, the cytochrome bc1 complex contains 3 respiratory subunits (MT-CYB, CYC1 and UQCRFS1), 2 core proteins (UQCRC1 and UQCRC2) and probably 6 low-molecular weight proteins. It depends on heme b as a cofactor.

It localises to the mitochondrion inner membrane. Component of the ubiquinol-cytochrome c reductase complex (complex III or cytochrome b-c1 complex) that is part of the mitochondrial respiratory chain. The b-c1 complex mediates electron transfer from ubiquinol to cytochrome c. Contributes to the generation of a proton gradient across the mitochondrial membrane that is then used for ATP synthesis. The protein is Cytochrome b (mt-cyb) of Heterodontus francisci (Horn shark).